The chain runs to 337 residues: Probable cytosolic iron-sulfur protein assembly protein Ciao1 (337 aa).

7 WD repeats span residues 12–51 (GHRG…RWVA), 58–97 (GHSR…FECN), 102–141 (GHEN…EYEC), 147–186 (THTQ…SDWS), 193–232 (SHES…NEFG), 251–290 (YHSR…SPHE), and 301–337 (AHSQ…EPEE).

It belongs to the WD repeat CIA1 family.

Functionally, essential component of the cytosolic iron-sulfur (Fe/S) protein assembly machinery. Required for the maturation of extramitochondrial Fe/S proteins. This chain is Probable cytosolic iron-sulfur protein assembly protein Ciao1, found in Aedes aegypti (Yellowfever mosquito).